Reading from the N-terminus, the 93-residue chain is Probable Fe(2+)-trafficking protein (93 aa).

Belongs to the Fe(2+)-trafficking protein family.

Its function is as follows. Could be a mediator in iron transactions between iron acquisition and iron-requiring processes, such as synthesis and/or repair of Fe-S clusters in biosynthetic enzymes. The polypeptide is Probable Fe(2+)-trafficking protein (Acidithiobacillus ferrooxidans (strain ATCC 23270 / DSM 14882 / CIP 104768 / NCIMB 8455) (Ferrobacillus ferrooxidans (strain ATCC 23270))).